Reading from the N-terminus, the 928-residue chain is Isoleucine--tRNA ligase (928 aa).

The 'HIGH' region motif lies at 57–67 (PFANGNIHMGH). E552 is an L-isoleucyl-5'-AMP binding site. A 'KMSKS' region motif is present at residues 593–597 (KMSKS). K596 contributes to the ATP binding site. Zn(2+) is bound by residues C887, C890, C907, and C910.

This sequence belongs to the class-I aminoacyl-tRNA synthetase family. IleS type 1 subfamily. In terms of assembly, monomer. It depends on Zn(2+) as a cofactor.

The protein localises to the cytoplasm. It catalyses the reaction tRNA(Ile) + L-isoleucine + ATP = L-isoleucyl-tRNA(Ile) + AMP + diphosphate. Catalyzes the attachment of isoleucine to tRNA(Ile). As IleRS can inadvertently accommodate and process structurally similar amino acids such as valine, to avoid such errors it has two additional distinct tRNA(Ile)-dependent editing activities. One activity is designated as 'pretransfer' editing and involves the hydrolysis of activated Val-AMP. The other activity is designated 'posttransfer' editing and involves deacylation of mischarged Val-tRNA(Ile). The sequence is that of Isoleucine--tRNA ligase from Lacticaseibacillus casei (strain BL23) (Lactobacillus casei).